A 251-amino-acid chain; its full sequence is 5'-nucleotidase SurE (251 aa).

A divalent metal cation-binding residues include Asp8, Asp9, Ser39, and Asn90.

It belongs to the SurE nucleotidase family. A divalent metal cation is required as a cofactor.

The protein localises to the cytoplasm. It catalyses the reaction a ribonucleoside 5'-phosphate + H2O = a ribonucleoside + phosphate. Its function is as follows. Nucleotidase that shows phosphatase activity on nucleoside 5'-monophosphates. The chain is 5'-nucleotidase SurE from Colwellia psychrerythraea (strain 34H / ATCC BAA-681) (Vibrio psychroerythus).